Here is a 129-residue protein sequence, read N- to C-terminus: Large ribosomal subunit protein bL12 (129 aa).

This sequence belongs to the bacterial ribosomal protein bL12 family. In terms of assembly, homodimer. Part of the ribosomal stalk of the 50S ribosomal subunit. Forms a multimeric L10(L12)X complex, where L10 forms an elongated spine to which 2 to 4 L12 dimers bind in a sequential fashion. Binds GTP-bound translation factors.

Forms part of the ribosomal stalk which helps the ribosome interact with GTP-bound translation factors. Is thus essential for accurate translation. This is Large ribosomal subunit protein bL12 from Treponema denticola (strain ATCC 35405 / DSM 14222 / CIP 103919 / JCM 8153 / KCTC 15104).